Reading from the N-terminus, the 362-residue chain is Type II methyltransferase M.MamI (362 aa).

The protein belongs to the N(4)/N(6)-methyltransferase family.

It carries out the reaction a 2'-deoxyadenosine in DNA + S-adenosyl-L-methionine = an N(6)-methyl-2'-deoxyadenosine in DNA + S-adenosyl-L-homocysteine + H(+). Its function is as follows. A gamma subtype methylase that recognizes the double-stranded sequence 5'-GATNNNNATC-3', methylates A-? on both strands, and protects the DNA from cleavage by the MamI endonuclease. This Microbacterium ammoniaphilum protein is Type II methyltransferase M.MamI.